The following is a 37-amino-acid chain: Large ribosomal subunit protein bL36 (37 aa).

Belongs to the bacterial ribosomal protein bL36 family.

The chain is Large ribosomal subunit protein bL36 from Moorella thermoacetica (strain ATCC 39073 / JCM 9320).